The sequence spans 86 residues: Neurotoxin LmNaTx35.2 (86 aa).

Positions 1–21 (MQLKIQLLMLVLMTVLTGVLG) are cleaved as a signal peptide. The 64-residue stretch at 22–85 (KDGYVVHEDT…VYGDKGTYCW (64 aa)) folds into the LCN-type CS-alpha/beta domain. Cystine bridges form between cysteine 33-cysteine 84, cysteine 37-cysteine 60, cysteine 46-cysteine 65, and cysteine 50-cysteine 67.

The protein belongs to the long (4 C-C) scorpion toxin superfamily. Sodium channel inhibitor family. Alpha subfamily. As to expression, expressed by the venom gland.

The protein resides in the secreted. Its function is as follows. Binds voltage-independently at site-3 of voltage-gated sodium channels (Nav) and inhibits the inactivation of the activated channels, thereby blocking neuronal transmission. The polypeptide is Neurotoxin LmNaTx35.2 (Lychas mucronatus (Chinese swimming scorpion)).